A 177-amino-acid polypeptide reads, in one-letter code: uncharacterized protein (177 aa).

The disordered stretch occupies residues 1-27 (MSHSRRAAPTQDQCHTPGFPTSRETSG).

This is an uncharacterized protein from Homo sapiens (Human).